The sequence spans 565 residues: Formate--tetrahydrofolate ligase (565 aa).

67-74 (TPLGEGKT) is an ATP binding site.

The protein belongs to the formate--tetrahydrofolate ligase family.

The catalysed reaction is (6S)-5,6,7,8-tetrahydrofolate + formate + ATP = (6R)-10-formyltetrahydrofolate + ADP + phosphate. Its pathway is one-carbon metabolism; tetrahydrofolate interconversion. The protein is Formate--tetrahydrofolate ligase of Saccharopolyspora erythraea (strain ATCC 11635 / DSM 40517 / JCM 4748 / NBRC 13426 / NCIMB 8594 / NRRL 2338).